The primary structure comprises 118 residues: Large ribosomal subunit protein bL20 (118 aa).

The protein belongs to the bacterial ribosomal protein bL20 family.

In terms of biological role, binds directly to 23S ribosomal RNA and is necessary for the in vitro assembly process of the 50S ribosomal subunit. It is not involved in the protein synthesizing functions of that subunit. This chain is Large ribosomal subunit protein bL20, found in Lacticaseibacillus casei (strain BL23) (Lactobacillus casei).